Reading from the N-terminus, the 110-residue chain is MKKLANYLWVEKVGDLYVFSMTPELQDDIGTVGYVEFVSPDEVKVDDEIVSIEASKTVIDVQTPLSGTIIERNTKAEEEPTILNSEKPEENWLFKLDDVDKEAFLALPEA.

The 88-residue stretch at 10–97 folds into the Lipoyl-binding domain; sequence VEKVGDLYVF…PEENWLFKLD (88 aa). Asp-27 is modified (ADP-ribosyl aspartic acid). At Lys-56 the chain carries N6-lipoyllysine.

In terms of assembly, lipoylated GcvH-L directly interacts with SAV0325, which reverses the SirTM-mediated mono-ADP-ribosylation of GcvH-L, and with the oxidoreductase SAV0322. In terms of processing, is lipoylated on K-56 by LplA2 (SAV0327) and then mono-ADP-ribosylated, probably on D-27, by SirTM (SAV0326). The mono-ADP-ribosylation state of GcvH-L might regulate the availability of the lipoyl moiety for redox reactions; ADP-ribosylation would inhibit the interaction of the oxidoreductase with GcvH-L when it is not required, thus ADP-ribosylation of GcvH-L might be acting to keep the response 'off' under non-stress conditions.

In terms of biological role, may act as a carrier protein for the ROS scavenging lipoyl moiety and/or as a substrate for oxidoreductases such as SAV0322 and SAV0323. The protein is Glycine cleavage system H-like protein of Staphylococcus aureus (strain Mu50 / ATCC 700699).